The sequence spans 362 residues: S-adenosylmethionine-dependent nucleotide dehydratase RSAD2 (362 aa).

A disordered region spans residues 47–73; sequence EQPQVRGEPEDTQETQEDGNSTQPTTP. Polar residues predominate over residues 64-73; that stretch reads DGNSTQPTTP. The Radical SAM core domain occupies 70-290; the sequence is PTTPVSVNYH…LERHKEVSCL (221 aa). The [4Fe-4S] cluster site is built by C84, C88, and C91. K198 is modified (N6-acetyllysine). A Glycyl lysine isopeptide (Lys-Gly) (interchain with G-Cter in ubiquitin) cross-link involves residue K207.

The protein belongs to the radical SAM superfamily. RSAD2 family. In terms of assembly, homodimer. Interacts with IRAK1 and TRAF6. Interacts with FPPS. Interacts with HADHB. Interacts (via C-terminus) with VAPA/VAP33 (via C-terminus). It depends on [4Fe-4S] cluster as a cofactor. Acetylated by HAT1. HAT1-mediated acetylation of Lys-198 in turn recruits UBE4A that stimulates RSAD2 polyubiquitination leading to proteasomal degradation. In terms of processing, 'Lys-6'-linked polyubiquitination at Lys-207 leads to RSAD2 protein degradation. As to expression, expressed at higher levels in atherosclerotic arteries than in normal arteries.

Its subcellular location is the endoplasmic reticulum membrane. It is found in the golgi apparatus. The protein localises to the endoplasmic reticulum. The protein resides in the lipid droplet. It localises to the mitochondrion. Its subcellular location is the mitochondrion inner membrane. It is found in the mitochondrion outer membrane. The enzyme catalyses CTP + AH2 + S-adenosyl-L-methionine = 3'-deoxy-3',4'-didehydro-CTP + 5'-deoxyadenosine + L-methionine + A + H2O + H(+). With respect to regulation, IRAK1 and TRAF6 synergistically activate RSAD2 increasing its activity with CTP as substrate about 10-fold. Functionally, interferon-inducible antiviral protein which plays a major role in the cell antiviral state induced by type I and type II interferon. Catalyzes the conversion of cytidine triphosphate (CTP) to 3'-deoxy-3',4'-didehydro-CTP (ddhCTP) via a SAM-dependent radical mechanism. In turn, ddhCTP acts as a chain terminator for the RNA-dependent RNA polymerases from multiple viruses and directly inhibits viral replication. Therefore, inhibits a wide range of DNA and RNA viruses. Also promotes TLR7 and TLR9-dependent production of IFN-beta production in plasmacytoid dendritic cells (pDCs) by facilitating 'Lys-63'-linked ubiquitination of IRAK1 by TRAF6. Plays a role in CD4+ T-cells activation and differentiation. Facilitates T-cell receptor (TCR)-mediated GATA3 activation and optimal T-helper 2 (Th2) cytokine production by modulating NFKB1 and JUNB activities. Can inhibit secretion of soluble proteins. In Mus musculus (Mouse), this protein is S-adenosylmethionine-dependent nucleotide dehydratase RSAD2.